Reading from the N-terminus, the 364-residue chain is Alanine racemase (364 aa).

The Proton acceptor; specific for D-alanine role is filled by lysine 34. Lysine 34 is subject to N6-(pyridoxal phosphate)lysine. Arginine 129 is a binding site for substrate. Residue tyrosine 259 is the Proton acceptor; specific for L-alanine of the active site. Methionine 307 lines the substrate pocket.

The protein belongs to the alanine racemase family. It depends on pyridoxal 5'-phosphate as a cofactor.

It catalyses the reaction L-alanine = D-alanine. The protein operates within amino-acid biosynthesis; D-alanine biosynthesis; D-alanine from L-alanine: step 1/1. Functionally, catalyzes the interconversion of L-alanine and D-alanine. May also act on other amino acids. This is Alanine racemase (alr) from Coxiella burnetii (strain Dugway 5J108-111).